The primary structure comprises 48 residues: MRVKINLKCSECGSLNYLTSKNKQNHPEKIQVPKFCPKDRKVTLHVES.

It belongs to the bacterial ribosomal protein bL33 family.

The chain is Large ribosomal subunit protein bL33B from Streptococcus thermophilus (strain CNRZ 1066).